The primary structure comprises 212 residues: uncharacterized protein (212 aa).

Residues Met1–Gly18 form the signal peptide. Residues Ile186 to Val208 form a helical membrane-spanning segment.

To A.fulgidus AF_0540.

It is found in the membrane. This is an uncharacterized protein from Archaeoglobus fulgidus (strain ATCC 49558 / DSM 4304 / JCM 9628 / NBRC 100126 / VC-16).